The primary structure comprises 509 residues: Steroid 17-alpha-hydroxylase/17,20 lyase (509 aa).

A heme-binding site is contributed by cysteine 445.

Belongs to the cytochrome P450 family. Requires heme as cofactor.

It localises to the membrane. The enzyme catalyses a C21-steroid + reduced [NADPH--hemoprotein reductase] + O2 = a 17alpha-hydroxy-C21-steroid + oxidized [NADPH--hemoprotein reductase] + H2O + H(+). It carries out the reaction 17alpha-hydroxyprogesterone + reduced [NADPH--hemoprotein reductase] + O2 = androst-4-ene-3,17-dione + acetate + oxidized [NADPH--hemoprotein reductase] + H2O + 2 H(+). The catalysed reaction is 17alpha-hydroxypregnenolone + reduced [NADPH--hemoprotein reductase] + O2 = 3beta-hydroxyandrost-5-en-17-one + acetate + oxidized [NADPH--hemoprotein reductase] + H2O + 2 H(+). Its pathway is lipid metabolism; steroid biosynthesis. Functionally, conversion of pregnenolone and progesterone to their 17-alpha-hydroxylated products and subsequently to dehydroepiandrosterone (DHEA) and androstenedione. Catalyzes both the 17-alpha-hydroxylation and the 17,20-lyase reaction. The chain is Steroid 17-alpha-hydroxylase/17,20 lyase (CYP17A1) from Squalus acanthias (Spiny dogfish).